We begin with the raw amino-acid sequence, 509 residues long: ATP synthase subunit alpha (509 aa).

ATP is bound at residue 171 to 178 (GDRKTGKT).

It belongs to the ATPase alpha/beta chains family. F-type ATPases have 2 components, CF(1) - the catalytic core - and CF(0) - the membrane proton channel. CF(1) has five subunits: alpha(3), beta(3), gamma(1), delta(1), epsilon(1). CF(0) has three main subunits: a(1), b(2) and c(9-12). The alpha and beta chains form an alternating ring which encloses part of the gamma chain. CF(1) is attached to CF(0) by a central stalk formed by the gamma and epsilon chains, while a peripheral stalk is formed by the delta and b chains.

The protein resides in the cell inner membrane. The enzyme catalyses ATP + H2O + 4 H(+)(in) = ADP + phosphate + 5 H(+)(out). Produces ATP from ADP in the presence of a proton gradient across the membrane. The alpha chain is a regulatory subunit. The sequence is that of ATP synthase subunit alpha from Ehrlichia chaffeensis (strain ATCC CRL-10679 / Arkansas).